Reading from the N-terminus, the 312-residue chain is 4-hydroxyproline 2-epimerase (312 aa).

Cys-88 acts as the Proton acceptor in catalysis. Substrate is bound by residues 89-90, His-208, and Asp-234; that span reads GH. Cys-238 acts as the Proton donor in catalysis. 239–240 contacts substrate; it reads GT.

The protein belongs to the proline racemase family.

It catalyses the reaction trans-4-hydroxy-L-proline = cis-4-hydroxy-D-proline. Catalyzes the epimerization of trans-4-hydroxy-L-proline (t4LHyp) to cis-4-hydroxy-D-proline (c4DHyp). Is likely involved in a degradation pathway that converts t4LHyp to alpha-ketoglutarate. Can also catalyze the epimerization of trans-3-hydroxy-L-proline (t3LHyp) to cis-3-hydroxy-D-proline (c3DHyp), albeit with 500-fold lower efficiency. Displays no proline racemase activity. The protein is 4-hydroxyproline 2-epimerase of Xanthomonas campestris pv. campestris (strain ATCC 33913 / DSM 3586 / NCPPB 528 / LMG 568 / P 25).